Reading from the N-terminus, the 59-residue chain is Potassium channel toxin alpha-KTx 16.2 (59 aa).

Residues 1 to 22 (MKIFSILLVALIICSISICTEA) form the signal peptide. 3 cysteine pairs are disulfide-bonded: C30-C51, C36-C56, and C40-C58.

It belongs to the short scorpion toxin superfamily. Potassium channel inhibitor family. Alpha-KTx 16 subfamily. As to expression, expressed by the venom gland.

Its subcellular location is the secreted. In terms of biological role, alpha-KTx 16.2: inhibits large conductance calcium-activated potassium channels (KCa1.1/Slo-beta4 KCNMA1/KCNMB4). It appears to block channel activity by a simple bimolecular inhibition process. Shows a fast association rate and a slow dissociation rate of binding on rat brain synaptosome. Significantly inhibits voltage-dependent sodium current and voltage-dependent delayed rectifier potassium currents. Significantly inhibits voltage-dependent sodium current (Nav) and voltage-dependent delayed rectifier potassium current. This is Potassium channel toxin alpha-KTx 16.2 from Olivierus martensii (Manchurian scorpion).